Consider the following 418-residue polypeptide: MKVLVLGAGVAGVSSAWYLAEAGHEVTVIDRAKGVAMETSFANAGQLSYGYTTPWAAPGIPTKALKWLFKSHPPLLFRPDGSLYQIEWLWRMLQNCTAAHYQTNKERMVRISEYSREMFRRFEAQTGMNFEERKKGTLQIFRQTKEVEAAEQDIAVLERYGVPYRRLKPEECAEFEPALARVTAKIAGGLHLPADATGDCHLFTENLYKLCQEKGVQFHFNQTISRIDHNGLRIKAVETETGRFEADAVVCALGCFSRTVLAQLDLDLPIYPVKGYSLTLPVTNSDGAPVSTVLDESYKVAITRFDNRIRVGGMAELSGYEIKLPEKRRETLALVVNDLFPEGGDLSQALFWSGLRPMTPDSTPLIGRTRFENLFLNTGHGTLGWTMSLGSAKLTADIVSGKDTEIRSDDLSLSRYQA.

Residue 3–17 (VLVLGAGVAGVSSAW) coordinates FAD.

This sequence belongs to the DadA oxidoreductase family. Requires FAD as cofactor.

The enzyme catalyses a D-alpha-amino acid + A + H2O = a 2-oxocarboxylate + AH2 + NH4(+). It participates in amino-acid degradation; D-alanine degradation; NH(3) and pyruvate from D-alanine: step 1/1. In terms of biological role, oxidative deamination of D-amino acids. This is D-amino acid dehydrogenase from Neisseria meningitidis serogroup C / serotype 2a (strain ATCC 700532 / DSM 15464 / FAM18).